Reading from the N-terminus, the 164-residue chain is ATP synthase subunit b (164 aa).

A helical membrane pass occupies residues 6–26; it reads GELVGNFILVTGSVIVLLLLI.

Belongs to the ATPase B chain family. F-type ATPases have 2 components, F(1) - the catalytic core - and F(0) - the membrane proton channel. F(1) has five subunits: alpha(3), beta(3), gamma(1), delta(1), epsilon(1). F(0) has three main subunits: a(1), b(2) and c(10-14). The alpha and beta chains form an alternating ring which encloses part of the gamma chain. F(1) is attached to F(0) by a central stalk formed by the gamma and epsilon chains, while a peripheral stalk is formed by the delta and b chains.

It is found in the cell membrane. F(1)F(0) ATP synthase produces ATP from ADP in the presence of a proton or sodium gradient. F-type ATPases consist of two structural domains, F(1) containing the extramembraneous catalytic core and F(0) containing the membrane proton channel, linked together by a central stalk and a peripheral stalk. During catalysis, ATP synthesis in the catalytic domain of F(1) is coupled via a rotary mechanism of the central stalk subunits to proton translocation. In terms of biological role, component of the F(0) channel, it forms part of the peripheral stalk, linking F(1) to F(0). The protein is ATP synthase subunit b of Streptococcus pyogenes serotype M3 (strain ATCC BAA-595 / MGAS315).